Reading from the N-terminus, the 376-residue chain is Cytochrome b (376 aa).

4 helical membrane passes run 28–48 (YGFL…FLAS), 72–94 (WCFR…LHIL), 107–127 (SWIS…IGYV), and 169–189 (FFVL…IHIF). The heme b site is built by His-78 and His-92. Heme b contacts are provided by His-173 and His-187. His-192 provides a ligand contact to a ubiquinone. 4 helical membrane-spanning segments follow: residues 214–234 (LLSL…IQSI), 274–294 (IPSK…LFLL), 317–337 (VPII…CPLP), and 340–360 (IFIL…LFSL).

The protein belongs to the cytochrome b family. In terms of assembly, the main subunits of complex b-c1 are: cytochrome b, cytochrome c1 and the Rieske protein. It depends on heme b as a cofactor.

The protein localises to the mitochondrion inner membrane. Its function is as follows. Component of the ubiquinol-cytochrome c reductase complex (complex III or cytochrome b-c1 complex) that is part of the mitochondrial respiratory chain. The b-c1 complex mediates electron transfer from ubiquinol to cytochrome c. Contributes to the generation of a proton gradient across the mitochondrial membrane that is then used for ATP synthesis. This is Cytochrome b (MT-CYB) from Plasmodium berghei.